The chain runs to 481 residues: 3-isopropylmalate dehydratase large subunit (481 aa).

Residues Cys-357, Cys-417, and Cys-420 each coordinate [4Fe-4S] cluster.

The protein belongs to the aconitase/IPM isomerase family. LeuC type 1 subfamily. As to quaternary structure, heterodimer of LeuC and LeuD. Requires [4Fe-4S] cluster as cofactor.

It catalyses the reaction (2R,3S)-3-isopropylmalate = (2S)-2-isopropylmalate. It functions in the pathway amino-acid biosynthesis; L-leucine biosynthesis; L-leucine from 3-methyl-2-oxobutanoate: step 2/4. Functionally, catalyzes the isomerization between 2-isopropylmalate and 3-isopropylmalate, via the formation of 2-isopropylmaleate. This Mycolicibacterium gilvum (strain PYR-GCK) (Mycobacterium gilvum (strain PYR-GCK)) protein is 3-isopropylmalate dehydratase large subunit.